We begin with the raw amino-acid sequence, 336 residues long: NADH-quinone oxidoreductase subunit H (336 aa).

A run of 8 helical transmembrane segments spans residues 12 to 32 (FLKI…LTWF), 84 to 104 (VVMA…GPGF), 118 to 138 (VNIA…GTIF), 156 to 176 (AAVV…VILL), 193 to 213 (GVWF…CMLA), 247 to 267 (LAEW…LFFG), 274 to 294 (IFGP…LVFF), and 313 to 333 (IAWK…AVVV).

The protein belongs to the complex I subunit 1 family. NDH-1 is composed of 14 different subunits. Subunits NuoA, H, J, K, L, M, N constitute the membrane sector of the complex.

It localises to the cell inner membrane. The catalysed reaction is a quinone + NADH + 5 H(+)(in) = a quinol + NAD(+) + 4 H(+)(out). In terms of biological role, NDH-1 shuttles electrons from NADH, via FMN and iron-sulfur (Fe-S) centers, to quinones in the respiratory chain. The immediate electron acceptor for the enzyme in this species is believed to be ubiquinone. Couples the redox reaction to proton translocation (for every two electrons transferred, four hydrogen ions are translocated across the cytoplasmic membrane), and thus conserves the redox energy in a proton gradient. This subunit may bind ubiquinone. The polypeptide is NADH-quinone oxidoreductase subunit H (Aquifex aeolicus (strain VF5)).